The chain runs to 464 residues: Trigger factor (464 aa).

Residues 169–256 enclose the PPIase FKBP-type domain; that stretch reads GDVAIVDYRG…MKELKAKELP (88 aa).

This sequence belongs to the FKBP-type PPIase family. Tig subfamily.

It is found in the cytoplasm. The enzyme catalyses [protein]-peptidylproline (omega=180) = [protein]-peptidylproline (omega=0). Functionally, involved in protein export. Acts as a chaperone by maintaining the newly synthesized protein in an open conformation. Functions as a peptidyl-prolyl cis-trans isomerase. This is Trigger factor from Microcystis aeruginosa (strain NIES-843 / IAM M-2473).